The following is a 566-amino-acid chain: 4-hydroxy-7-methoxy-3-oxo-3,4-dihydro-2H-1,4-benzoxazin-2-yl glucoside beta-D-glucosidase 1, chloroplastic (566 aa).

The N-terminal 54 residues, 1-54 (MAPLLAAAMNHAAAHPGLRSHLVGPNNESFSRHHLPSSSPQSSKRRCNLSFTTR), are a transit peptide targeting the chloroplast. The interval 17-47 (GLRSHLVGPNNESFSRHHLPSSSPQSSKRRC) is disordered. Residues Gln-92, His-196, and 244–245 (NE) contribute to the a beta-D-glucoside site. Glu-245 serves as the catalytic Proton donor. Cysteines 264 and 270 form a disulfide. A dimerization region spans residues 325–361 (SFLDKQAEERSWDINLGWFLEPVVRGDYPFSMRSLAR). Tyr-387 is a binding site for a beta-D-glucoside. Dimerization regions lie at residues 394 to 405 (NIDISPNYSPVL) and 450 to 453 (KYGN). A beta-D-glucoside is bound by residues Glu-460, Trp-511, 518-519 (EW), and Tyr-527. The active-site Nucleophile is Glu-460.

The protein belongs to the glycosyl hydrolase 1 family. Homo- and heterodimer. Expressed in all seedling parts. Most abundant in the coleoptile.

It is found in the plastid. It localises to the chloroplast. It catalyses the reaction Hydrolysis of terminal, non-reducing beta-D-glucosyl residues with release of beta-D-glucose.. The enzyme catalyses DIMBOA beta-D-glucoside + H2O = DIMBOA + D-glucose. The catalysed reaction is DIBOA beta-D-glucoside + H2O = DIBOA + D-glucose. Reversibly inhibited by micromolar concentrations of Hg(2+) or Ag(+), but irreversibly inhibited by alkylation in presence of urea. Competitive inhibition by p-nitrophenyl beta-D-thioglucoside (pNPTGlc), glucotetrazole, and para-hydroxy-S-mandelonitrile beta-glucoside (dhurrin). Functionally, is implicated in many functions such as ABA metabolism, hydrolysis of conjugated gibberellins, conversion of storage forms of cytokinins to active forms. Also acts in defense of young plant parts against pests via the production of hydroxamic acids from hydroxamic acid glucosides. Enzymatic activity is highly correlated with plant growth. The preferred substrate is DIMBOA-beta-D-glucoside. Hydrolyzes the chromogenic substrate 6-bromo-2-naphthyl-beta-D-glucoside (6BNGlc) and various artificial aryl beta-glucosides. No activity with cellobiose, arbutin, gentiobiose, linamarin or dhurrin as substrates. The polypeptide is 4-hydroxy-7-methoxy-3-oxo-3,4-dihydro-2H-1,4-benzoxazin-2-yl glucoside beta-D-glucosidase 1, chloroplastic (GLU1) (Zea mays (Maize)).